Reading from the N-terminus, the 1027-residue chain is Error-prone DNA polymerase (1027 aa).

Belongs to the DNA polymerase type-C family. DnaE2 subfamily.

The protein resides in the cytoplasm. It catalyses the reaction DNA(n) + a 2'-deoxyribonucleoside 5'-triphosphate = DNA(n+1) + diphosphate. In terms of biological role, DNA polymerase involved in damage-induced mutagenesis and translesion synthesis (TLS). It is not the major replicative DNA polymerase. In Dechloromonas aromatica (strain RCB), this protein is Error-prone DNA polymerase.